The chain runs to 740 residues: Alpha-1,6-mannosylglycoprotein 6-beta-N-acetylglucosaminyltransferase A (740 aa).

At 1 to 13 (MAFFTPWKLSSQK) the chain is on the cytoplasmic side. The chain crosses the membrane as a helical; Signal-anchor for type II membrane protein span at residues 14-30 (LGFFLVTFGFIWGMMLL). Over 31–740 (HFTIQQRTQP…GQVALCKDCL (710 aa)) the chain is Lumenal. Asn109, Asn114, and Asn117 each carry an N-linked (GlcNAc...) asparagine glycan. Disulfide bonds link Cys144-Cys182, Cys155-Cys195, Cys171-Cys337, Cys371-Cys625, Cys648-Cys723, Cys652-Cys725, Cys659-Cys712, Cys680-Cys701, and Cys736-Cys739. A sufficient for catalytic activity region spans residues 212–740 (NSLAEIRTDF…GQVALCKDCL (529 aa)). A glycan (N-linked (GlcNAc...) asparagine) is linked at Asn333. Position 377–378 (377–378 (DS)) interacts with substrate. N-linked (GlcNAc...) asparagine glycans are attached at residues Asn432 and Asn446. Glu525 provides a ligand contact to UDP-N-acetyl-alpha-D-glucosamine. Lys553 provides a ligand contact to substrate.

It belongs to the glycosyltransferase 18 family. Post-translationally, N-glycosylated. A secreted form is released from the membrane after cleavage by gamma-secretase.

The protein localises to the golgi apparatus membrane. It localises to the secreted. The enzyme catalyses N(4)-{beta-D-GlcNAc-(1-&gt;2)-[beta-D-GlcNAc-(1-&gt;4)]-alpha-D-Man-(1-&gt;3)-[beta-D-GlcNAc-(1-&gt;2)-alpha-D-Man-(1-&gt;6)]-beta-D-Man-(1-&gt;4)-beta-D-GlcNAc-(1-&gt;4)-beta-D-GlcNAc}-L-asparaginyl-[protein] + UDP-N-acetyl-alpha-D-glucosamine = N(4)-{beta-D-GlcNAc-(1-&gt;2)-[beta-D-GlcNAc-(1-&gt;4)]-alpha-D-Man-(1-&gt;3)-[beta-D-GlcNAc-(1-&gt;2)-[beta-D-GlcNAc-(1-&gt;6)]-alpha-D-Man-(1-&gt;6)]-beta-D-Man-(1-&gt;4)-beta-D-GlcNAc-(1-&gt;4)-beta-D-GlcNAc}-L-asparaginyl-[protein] + UDP + H(+). It participates in protein modification; protein glycosylation. Catalyzes the addition of N-acetylglucosamine (GlcNAc) in beta 1-6 linkage to the alpha-linked mannose of biantennary N-linked oligosaccharides. Catalyzes an important step in the biosynthesis of branched, complex-type N-glycans, such as those found on EGFR, TGFR (TGF-beta receptor) and CDH2. Via its role in the biosynthesis of complex N-glycans, plays an important role in the activation of cellular signaling pathways, reorganization of the actin cytoskeleton, cell-cell adhesion and cell migration. MGAT5-dependent EGFR N-glycosylation enhances the interaction between EGFR and LGALS3 and thereby prevents rapid EGFR endocytosis and prolongs EGFR signaling. Required for efficient interaction between TGFB1 and its receptor. Enhances activation of intracellular signaling pathways by several types of growth factors, including FGF2, PDGF, IGF, TGFB1 and EGF. MGAT5-dependent CDH2 N-glycosylation inhibits CDH2-mediated homotypic cell-cell adhesion and contributes to the regulation of downstream signaling pathways. Promotes cell migration. Contributes to the regulation of the inflammatory response. MGAT5-dependent TCR N-glycosylation enhances the interaction between TCR and LGALS3, limits agonist-induced TCR clustering, and thereby dampens TCR-mediated responses to antigens. Required for normal leukocyte evasation and accumulation at sites of inflammation. Inhibits attachment of monocytes to the vascular endothelium and subsequent monocyte diapedesis. In terms of biological role, promotes proliferation of umbilical vein endothelial cells and angiogenesis, at least in part by promoting the release of the growth factor FGF2 from the extracellular matrix. The protein is Alpha-1,6-mannosylglycoprotein 6-beta-N-acetylglucosaminyltransferase A (MGAT5) of Cricetulus griseus (Chinese hamster).